Here is a 648-residue protein sequence, read N- to C-terminus: 1-deoxy-D-xylulose-5-phosphate synthase (648 aa).

Thiamine diphosphate is bound by residues H74 and 115–117 (GHA). D146 is a Mg(2+) binding site. Thiamine diphosphate is bound by residues 147–148 (GA), N176, Y292, and E375. N176 lines the Mg(2+) pocket.

This sequence belongs to the transketolase family. DXPS subfamily. As to quaternary structure, homodimer. The cofactor is Mg(2+). Thiamine diphosphate is required as a cofactor.

The enzyme catalyses D-glyceraldehyde 3-phosphate + pyruvate + H(+) = 1-deoxy-D-xylulose 5-phosphate + CO2. Its pathway is metabolic intermediate biosynthesis; 1-deoxy-D-xylulose 5-phosphate biosynthesis; 1-deoxy-D-xylulose 5-phosphate from D-glyceraldehyde 3-phosphate and pyruvate: step 1/1. Catalyzes the acyloin condensation reaction between C atoms 2 and 3 of pyruvate and glyceraldehyde 3-phosphate to yield 1-deoxy-D-xylulose-5-phosphate (DXP). This is 1-deoxy-D-xylulose-5-phosphate synthase from Synechococcus sp. (strain JA-2-3B'a(2-13)) (Cyanobacteria bacterium Yellowstone B-Prime).